Reading from the N-terminus, the 127-residue chain is Aspartate 1-decarboxylase (127 aa).

Catalysis depends on Ser-25, which acts as the Schiff-base intermediate with substrate; via pyruvic acid. A Pyruvic acid (Ser) modification is found at Ser-25. Substrate is bound at residue Thr-57. Tyr-58 (proton donor) is an active-site residue. Residue 73–75 coordinates substrate; sequence GSA.

This sequence belongs to the PanD family. In terms of assembly, heterooctamer of four alpha and four beta subunits. It depends on pyruvate as a cofactor. Is synthesized initially as an inactive proenzyme, which is activated by self-cleavage at a specific serine bond to produce a beta-subunit with a hydroxyl group at its C-terminus and an alpha-subunit with a pyruvoyl group at its N-terminus.

Its subcellular location is the cytoplasm. It catalyses the reaction L-aspartate + H(+) = beta-alanine + CO2. Its pathway is cofactor biosynthesis; (R)-pantothenate biosynthesis; beta-alanine from L-aspartate: step 1/1. Catalyzes the pyruvoyl-dependent decarboxylation of aspartate to produce beta-alanine. The protein is Aspartate 1-decarboxylase of Laribacter hongkongensis (strain HLHK9).